Consider the following 414-residue polypeptide: Histidine--tRNA ligase (414 aa).

It belongs to the class-II aminoacyl-tRNA synthetase family. As to quaternary structure, homodimer.

It localises to the cytoplasm. It catalyses the reaction tRNA(His) + L-histidine + ATP = L-histidyl-tRNA(His) + AMP + diphosphate + H(+). The chain is Histidine--tRNA ligase from Anaeromyxobacter sp. (strain K).